The sequence spans 311 residues: N-acetylmuramic acid 6-phosphate etherase (311 aa).

Residues 66-229 (VAVRMARGGR…STITMIRLGK (164 aa)) enclose the SIS domain. E94 serves as the catalytic Proton donor. E125 is an active-site residue.

Belongs to the GCKR-like family. MurNAc-6-P etherase subfamily. Homodimer.

The catalysed reaction is N-acetyl-D-muramate 6-phosphate + H2O = N-acetyl-D-glucosamine 6-phosphate + (R)-lactate. It functions in the pathway amino-sugar metabolism; N-acetylmuramate degradation. Specifically catalyzes the cleavage of the D-lactyl ether substituent of MurNAc 6-phosphate, producing GlcNAc 6-phosphate and D-lactate. This is N-acetylmuramic acid 6-phosphate etherase from Streptomyces coelicolor (strain ATCC BAA-471 / A3(2) / M145).